A 282-amino-acid polypeptide reads, in one-letter code: Elongation factor Ts (282 aa).

An involved in Mg(2+) ion dislocation from EF-Tu region spans residues 79 to 82 (TDFV).

It belongs to the EF-Ts family.

Its subcellular location is the cytoplasm. In terms of biological role, associates with the EF-Tu.GDP complex and induces the exchange of GDP to GTP. It remains bound to the aminoacyl-tRNA.EF-Tu.GTP complex up to the GTP hydrolysis stage on the ribosome. The protein is Elongation factor Ts of Colwellia psychrerythraea (strain 34H / ATCC BAA-681) (Vibrio psychroerythus).